Reading from the N-terminus, the 498-residue chain is Acetyl-coenzyme A carboxylase carboxyl transferase subunit beta, chloroplastic (498 aa).

Positions 228–498 constitute a CoA carboxyltransferase N-terminal domain; the sequence is LWVQCEICYG…LNHNLSRTLT (271 aa). The Zn(2+) site is built by cysteine 232, cysteine 235, cysteine 251, and cysteine 254. The segment at 232–254 adopts a C4-type zinc-finger fold; that stretch reads CEICYGLNYKKFFKSKMNICEQC.

The protein belongs to the AccD/PCCB family. As to quaternary structure, acetyl-CoA carboxylase is a heterohexamer composed of biotin carboxyl carrier protein, biotin carboxylase and 2 subunits each of ACCase subunit alpha and ACCase plastid-coded subunit beta (accD). Zn(2+) serves as cofactor.

It is found in the plastid. The protein localises to the chloroplast stroma. The catalysed reaction is N(6)-carboxybiotinyl-L-lysyl-[protein] + acetyl-CoA = N(6)-biotinyl-L-lysyl-[protein] + malonyl-CoA. It functions in the pathway lipid metabolism; malonyl-CoA biosynthesis; malonyl-CoA from acetyl-CoA: step 1/1. Functionally, component of the acetyl coenzyme A carboxylase (ACC) complex. Biotin carboxylase (BC) catalyzes the carboxylation of biotin on its carrier protein (BCCP) and then the CO(2) group is transferred by the transcarboxylase to acetyl-CoA to form malonyl-CoA. The chain is Acetyl-coenzyme A carboxylase carboxyl transferase subunit beta, chloroplastic from Populus trichocarpa (Western balsam poplar).